Here is a 270-residue protein sequence, read N- to C-terminus: MPELPEVEVVRRGLETILKDQPILEKVELMRKDLREPIPAKKISTLVGQPLTSIERRAKYLLLWTPKGAMLSHLGMTGTWRVAVPGDERLHDHIYLHFSGDLRLAYRDPRRFGCFDFVQDPLKHPKLADLGPEPLEAEFNGPLLWEKLRGKDVALKVALMDQKVVVGVGNIYASEALFAAGIKPTLPARKLSLERASLLVGEIKKILSQSIKAGGSSISDFAQASGESGYFQTSFRVYGRDKEPCVTCGQQVKSKVLGGRNTFWCSRCQK.

Pro-2 acts as the Schiff-base intermediate with DNA in catalysis. Catalysis depends on Glu-3, which acts as the Proton donor. Lys-59 serves as the catalytic Proton donor; for beta-elimination activity. DNA-binding residues include His-91, Arg-110, and Lys-151. The FPG-type zinc-finger motif lies at Arg-236–Lys-270. Residue Arg-260 is the Proton donor; for delta-elimination activity of the active site.

This sequence belongs to the FPG family. Monomer. Requires Zn(2+) as cofactor.

It carries out the reaction Hydrolysis of DNA containing ring-opened 7-methylguanine residues, releasing 2,6-diamino-4-hydroxy-5-(N-methyl)formamidopyrimidine.. The catalysed reaction is 2'-deoxyribonucleotide-(2'-deoxyribose 5'-phosphate)-2'-deoxyribonucleotide-DNA = a 3'-end 2'-deoxyribonucleotide-(2,3-dehydro-2,3-deoxyribose 5'-phosphate)-DNA + a 5'-end 5'-phospho-2'-deoxyribonucleoside-DNA + H(+). Involved in base excision repair of DNA damaged by oxidation or by mutagenic agents. Acts as a DNA glycosylase that recognizes and removes damaged bases. Has a preference for oxidized purines, such as 7,8-dihydro-8-oxoguanine (8-oxoG). Has AP (apurinic/apyrimidinic) lyase activity and introduces nicks in the DNA strand. Cleaves the DNA backbone by beta-delta elimination to generate a single-strand break at the site of the removed base with both 3'- and 5'-phosphates. This chain is Formamidopyrimidine-DNA glycosylase, found in Bdellovibrio bacteriovorus (strain ATCC 15356 / DSM 50701 / NCIMB 9529 / HD100).